Here is a 686-residue protein sequence, read N- to C-terminus: X-linked interleukin-1 receptor accessory protein-like 2 (686 aa).

Residues 1–16 form the signal peptide; that stretch reads MKLPLLLALVVCSAVS. Over 17–354 the chain is Extracellular; that stretch reads TNLKMVSKRN…LLRKKDLIYK (338 aa). Positions 32 to 132 constitute an Ig-like C2-type 1 domain; that stretch reads IDWSVDLKTY…YCMKVSMSLT (101 aa). Residues Cys53 and Cys116 are joined by a disulfide bond. N-linked (GlcNAc...) asparagine glycans are attached at residues Asn63, Asn120, Asn136, Asn211, and Asn328. Ig-like C2-type domains lie at 141-232 and 239-347; these read CYNS…LKVT and PPKP…VLLR. Cystine bridges form between Cys162–Cys214 and Cys265–Cys331. A helical membrane pass occupies residues 355–375; that stretch reads IELAGGLGAIFLLLILLLVVY. Residues 376 to 686 are Cytoplasmic-facing; the sequence is KCYNIELMLF…KELSFTSDIW (311 aa). Residues 400–556 enclose the TIR domain; sequence KEYDAYLSYT…KFWKHLVYEM (157 aa). Residue Glu488 is part of the active site.

It belongs to the interleukin-1 receptor family. Detected in fetal brain after day 12.5, in particular in parts of the diencephalon and in the basal plate of the spinal cord. In postnatal brain detected in cerebral cortex, olfactory bulb, in the CA1 region of the hippocampus and in Purkinje cells of the Xth cerebellar lobule.

The protein resides in the membrane. It carries out the reaction NAD(+) + H2O = ADP-D-ribose + nicotinamide + H(+). The polypeptide is X-linked interleukin-1 receptor accessory protein-like 2 (Il1rapl2) (Mus musculus (Mouse)).